The primary structure comprises 467 residues: Ergochrome gene cluster transcriptional coactivator CPUR_05432 (467 aa).

An HTH iclR-type domain is found at 109–179 (IAIQCEMLGS…RRGYVAHTPL (71 aa)). A DNA-binding region (H-T-H motif) is located at residues 139–158 (IQDVANLSNVPEQQLAQMIG).

Its subcellular location is the nucleus. Functionally, transcriptional coactivator; part of the gene cluster responsible for the typical purple-black color of the ergot sclerotia. The ergochrome gene cluster produces several ergot pigments including the yellow ergochrome secalonic acid and its derivatives, as well as the red anthraquinones endocrocin and clavorubin. With CPUR_05433, coregulates the production of geodin. The sequence is that of Ergochrome gene cluster transcriptional coactivator CPUR_05432 from Claviceps purpurea (strain 20.1) (Ergot fungus).